Reading from the N-terminus, the 149-residue chain is Transcriptional repressor NrdR (149 aa).

A zinc finger lies at 3–33; that stretch reads CPFCSSEDTKVVDSRTTIDGSTKRRRECNNC. In terms of domain architecture, ATP-cone spans 48 to 138; sequence IYVVKKDNRR…VYKEFDDIKS (91 aa).

Belongs to the NrdR family. It depends on Zn(2+) as a cofactor.

Its function is as follows. Negatively regulates transcription of bacterial ribonucleotide reductase nrd genes and operons by binding to NrdR-boxes. The chain is Transcriptional repressor NrdR from Fusobacterium nucleatum subsp. nucleatum (strain ATCC 25586 / DSM 15643 / BCRC 10681 / CIP 101130 / JCM 8532 / KCTC 2640 / LMG 13131 / VPI 4355).